A 664-amino-acid polypeptide reads, in one-letter code: MLHIRSWTLPKSSCSTLIWNRGFSKAPVLQVAKVIAVQDKKINLDREKHIQRIQERIEKIPISNYRNFSIVAHVDHGKSTLSDRLLELTGVIQPGAANKQVLDKLDVERERGITIKAQTCTMFYHDTNTKEDYLLHLVDTPGHVDFRAEVSRSYASCGGALLLVDAAQGVQAQTVANFYLAYSMGLKLIPIINKIDLDAADIPRAMDQVETTFELNREDCIPVSAKTGLNVENIIPSIINNIPPPQGDINKPLKALLVDSWHDPYVGVVMLVHIVDGKMKKGMKLLSAHTSKKYEVKEVGVMYPDKTPMDVLRAGQVGYIIPGMKNPREALIGDTFFQNGQHENLEPLPGFEEPKPMVFVGAFPADGGEFKVMNDHMENLVLNDRSVTLEKETSNALGLGWRLGFLGSLHASVFKERLEKEYGAKIILTAPTVPYKIVYKDGTEKVITNPDEFPGADQRALNIDHLMEPYVKAIMTIPDEYIGVVMSLCENNRGIQNEMEYLNTGQVLLKYELPLAQLVEDFFGKLKGATKGYASLDYEDSGYKKSDIVKMELCVSGIPQDALSQVMHRSQVQSRGKEYVARFKEYLKSQLFEVAIQAKVNNKVVARETIKAKRKDVTQRLHAADISRRKKLLERQKEGKKQMKASGRVHINHEAYQAFLRRSD.

The tr-type G domain maps to 63–246; the sequence is SNYRNFSIVA…SIINNIPPPQ (184 aa). GTP is bound by residues 72–79, 139–143, and 193–196; these read AHVDHGKS, DTPGH, and NKID.

Belongs to the TRAFAC class translation factor GTPase superfamily. Classic translation factor GTPase family. LepA subfamily.

It localises to the mitochondrion inner membrane. The catalysed reaction is GTP + H2O = GDP + phosphate + H(+). Functionally, promotes mitochondrial protein synthesis. May act as a fidelity factor of the translation reaction, by catalyzing a one-codon backward translocation of tRNAs on improperly translocated ribosomes. Binds to mitochondrial ribosomes in a GTP-dependent manner. The protein is Translation factor GUF1, mitochondrial of Clavispora lusitaniae (strain ATCC 42720) (Yeast).